We begin with the raw amino-acid sequence, 363 residues long: Probable endopolygalacturonase A (363 aa).

Residues 1–20 form the signal peptide; that stretch reads MQLLQSSVIAATVGAALVAA. Positions 21 to 28 are excised as a propeptide; that stretch reads APVELEAR. The cysteines at positions 31 and 46 are disulfide-linked. PbH1 repeat units lie at residues 158–187, 188–209, 210–230, 239–260, 268–290, and 302–347; these read SDNLNITDVTIDNSAGTAEGHNTDAFDIGS, STYINIDGATVYNQDDCLAINS, GSHITFTNGYCDGGHGLSIGS, VEDVTISNSKVVNSQNGVRIKT, VSNVKFEDITLSGITKYGLVVEQ, and TNGI…SITG. N-linked (GlcNAc...) asparagine glycosylation occurs at N162. Catalysis depends on D202, which acts as the Proton donor. A disulfide bridge connects residues C204 and C220. H224 is a catalytic residue. Cystine bridges form between C330–C335 and C354–C363.

This sequence belongs to the glycosyl hydrolase 28 family.

It localises to the secreted. It carries out the reaction (1,4-alpha-D-galacturonosyl)n+m + H2O = (1,4-alpha-D-galacturonosyl)n + (1,4-alpha-D-galacturonosyl)m.. Functionally, involved in maceration and soft-rotting of plant tissue. Hydrolyzes the 1,4-alpha glycosidic bonds of de-esterified pectate in the smooth region of the plant cell wall. The polypeptide is Probable endopolygalacturonase A (pgaA) (Aspergillus parasiticus).